Here is a 153-residue protein sequence, read N- to C-terminus: Superoxide dismutase [Cu-Zn] (153 aa).

Residues His-45, His-47, and His-62 each coordinate Cu cation. Cys-56 and Cys-145 form a disulfide bridge. 4 residues coordinate Zn(2+): His-62, His-70, His-79, and Asp-82. Cu cation is bound at residue His-119.

This sequence belongs to the Cu-Zn superoxide dismutase family. Homodimer. It depends on Cu cation as a cofactor. Requires Zn(2+) as cofactor.

It localises to the cytoplasm. It carries out the reaction 2 superoxide + 2 H(+) = H2O2 + O2. Destroys radicals which are normally produced within the cells and which are toxic to biological systems. The chain is Superoxide dismutase [Cu-Zn] from Drosophila willistoni (Fruit fly).